The primary structure comprises 201 residues: Recombination protein RecR (201 aa).

The C4-type zinc-finger motif lies at 57–72 (CCDCRTFTEEERCTIC). Residues 81–176 (GQICVVESPA…AASRIAHGVP (96 aa)) enclose the Toprim domain.

This sequence belongs to the RecR family.

May play a role in DNA repair. It seems to be involved in an RecBC-independent recombinational process of DNA repair. It may act with RecF and RecO. This is Recombination protein RecR from Proteus mirabilis (strain HI4320).